Here is a 338-residue protein sequence, read N- to C-terminus: uncharacterized protein (338 aa).

Transmembrane regions (helical) follow at residues 11–31 (ILSL…TFAI), 249–269 (IAVF…IIPA), and 318–338 (VPTP…GLGL).

The protein resides in the cell membrane. This is an uncharacterized protein from Methanocaldococcus jannaschii (strain ATCC 43067 / DSM 2661 / JAL-1 / JCM 10045 / NBRC 100440) (Methanococcus jannaschii).